Here is a 159-residue protein sequence, read N- to C-terminus: Cyclic pyranopterin monophosphate synthase (159 aa).

Substrate is bound by residues 75–77 and 113–114; these read LCH and ME. The active site involves D128.

This sequence belongs to the MoaC family. In terms of assembly, homohexamer; trimer of dimers.

It catalyses the reaction (8S)-3',8-cyclo-7,8-dihydroguanosine 5'-triphosphate = cyclic pyranopterin phosphate + diphosphate. It participates in cofactor biosynthesis; molybdopterin biosynthesis. In terms of biological role, catalyzes the conversion of (8S)-3',8-cyclo-7,8-dihydroguanosine 5'-triphosphate to cyclic pyranopterin monophosphate (cPMP). In Aliivibrio salmonicida (strain LFI1238) (Vibrio salmonicida (strain LFI1238)), this protein is Cyclic pyranopterin monophosphate synthase.